The primary structure comprises 80 residues: Conotoxin VnMSGL-0121 (80 aa).

The first 20 residues, 1–20 (MSGLGIMVLTLLLLVSMATS), serve as a signal peptide directing secretion. A propeptide spanning residues 21-44 (HQDGGGKQATQRDAINVRRRRSIT) is cleaved from the precursor. Disulfide bonds link Cys-52–Cys-65, Cys-56–Cys-74, and Cys-64–Cys-78. At Phe-79 the chain carries Phenylalanine amide.

Belongs to the conotoxin O3 superfamily. Expressed by the venom duct.

It is found in the secreted. In Conus ventricosus (Mediterranean cone), this protein is Conotoxin VnMSGL-0121.